Reading from the N-terminus, the 568-residue chain is Proton-coupled zinc antiporter SLC30A9, mitochondrial (568 aa).

A mitochondrion-targeting transit peptide spans 1–67 (MLPGLAAAAA…IGTLSQVKLY (67 aa)). 5 helical membrane passes run 239–259 (VVMVAICINGLNCFFKFLAWI), 314–334 (GVGIFMMGAGLSWYHGVMGLL), 342–362 (LLWAYCILAGSLVSEGATLLV), 392–412 (VILLEDTAAVLGVIIAATCMG), and 424–444 (SLGSLGVGTLLGMVSAFLIYT). The LXXLL motif motif lies at 462-466 (LTELL).

It belongs to the cation diffusion facilitator (CDF) transporter (TC 2.A.4) family. SLC30A subfamily. Interacts with GRIP1, ESR1 and AR. As to expression, ubiquitously expressed in fetal and adult tissues and cancer cell lines.

The protein resides in the mitochondrion membrane. It localises to the nucleus. Its subcellular location is the endoplasmic reticulum. It carries out the reaction Zn(2+)(in) + 2 H(+)(out) = Zn(2+)(out) + 2 H(+)(in). Functionally, mitochondrial proton-coupled zinc ion antiporter mediating the export of zinc from the mitochondria and involved in zinc homeostasis, zinc mobilization as well as mitochondrial morphology and health. In nucleus, functions as a secondary coactivator for nuclear receptors by cooperating with p160 coactivators subtypes. Plays a role in transcriptional activation of Wnt-responsive genes. This is Proton-coupled zinc antiporter SLC30A9, mitochondrial from Homo sapiens (Human).